The chain runs to 305 residues: Heme A synthase (305 aa).

At 1–6 (MKKFLK) the chain is on the cytoplasmic side. A helical membrane pass occupies residues 7-27 (VWSVLTIICMTVVVFGGALVT). At 28–63 (KTGSADGCGNSWPLCNGQLVRLTDVTPEKLIEFMHR) the chain is on the extracellular side. An intrachain disulfide couples C35 to C42. E59 is a catalytic residue. Heme o is bound at residue H62. The chain crosses the membrane as a helical span at residues 64-84 (MTTGISSIFVIVLAICAWIYM). The Cytoplasmic segment spans residues 85–92 (KNRRETKP). The chain crosses the membrane as a helical span at residues 93-113 (LAIIAVLFLIIQALMGMAAVV). At 114–122 (WGQNPYIMA) the chain is on the extracellular side. The chain crosses the membrane as a helical span at residues 123-143 (LHFGISIICYASIVLLALMIF). H124 contacts heme o. The Cytoplasmic portion of the chain corresponds to 144–160 (EVDRKFDARNLVMGTKL). Residues 161–181 (RINIYALTIYTYLAVYTGALV) form a helical membrane-spanning segment. Residues 182–212 (RHEKASMAVPVWPFENGKFIMPDSVQDYVQY) are Extracellular-facing. The chain crosses the membrane as a helical span at residues 213–233 (FHRVAAFILIVWLLYVTWLVF). H214 lines the heme b pocket. At 234 to 240 (RDYRRYR) the chain is on the cytoplasmic side. A helical membrane pass occupies residues 241 to 261 (VLTFSMVLSLLFIALQAVTGA). Residues 262 to 271 (LSVYTGVNLY) are Extracellular-facing. The helical transmembrane segment at 272–292 (IALAHSLIITMLFALLCYLCL) threads the bilayer. H276 is a binding site for heme b. The Cytoplasmic segment spans residues 293–305 (LASRSKSNRLRIK).

This sequence belongs to the COX15/CtaA family. Type 1 subfamily. As to quaternary structure, interacts with CtaB. Heme b is required as a cofactor.

The protein resides in the cell membrane. The catalysed reaction is Fe(II)-heme o + 2 A + H2O = Fe(II)-heme a + 2 AH2. It functions in the pathway porphyrin-containing compound metabolism; heme A biosynthesis; heme A from heme O: step 1/1. Catalyzes the conversion of heme O to heme A by two successive hydroxylations of the methyl group at C8. The first hydroxylation forms heme I, the second hydroxylation results in an unstable dihydroxymethyl group, which spontaneously dehydrates, resulting in the formyl group of heme A. The sequence is that of Heme A synthase from Listeria welshimeri serovar 6b (strain ATCC 35897 / DSM 20650 / CCUG 15529 / CIP 8149 / NCTC 11857 / SLCC 5334 / V8).